We begin with the raw amino-acid sequence, 179 residues long: Large ribosomal subunit protein uL5 (179 aa).

It belongs to the universal ribosomal protein uL5 family. Part of the 50S ribosomal subunit; part of the 5S rRNA/L5/L18/L25 subcomplex. Contacts the 5S rRNA and the P site tRNA. Forms a bridge to the 30S subunit in the 70S ribosome.

Its function is as follows. This is one of the proteins that bind and probably mediate the attachment of the 5S RNA into the large ribosomal subunit, where it forms part of the central protuberance. In the 70S ribosome it contacts protein S13 of the 30S subunit (bridge B1b), connecting the 2 subunits; this bridge is implicated in subunit movement. Contacts the P site tRNA; the 5S rRNA and some of its associated proteins might help stabilize positioning of ribosome-bound tRNAs. The sequence is that of Large ribosomal subunit protein uL5 from Rickettsia peacockii (strain Rustic).